The following is a 210-amino-acid chain: Urease accessory protein UreG (210 aa).

Residue 15 to 22 (GPVGSGKT) coordinates GTP.

It belongs to the SIMIBI class G3E GTPase family. UreG subfamily. As to quaternary structure, homodimer. UreD, UreF and UreG form a complex that acts as a GTP-hydrolysis-dependent molecular chaperone, activating the urease apoprotein by helping to assemble the nickel containing metallocenter of UreC. The UreE protein probably delivers the nickel.

The protein resides in the cytoplasm. Its function is as follows. Facilitates the functional incorporation of the urease nickel metallocenter. This process requires GTP hydrolysis, probably effectuated by UreG. In Ralstonia nicotianae (strain ATCC BAA-1114 / GMI1000) (Ralstonia solanacearum), this protein is Urease accessory protein UreG.